Here is a 205-residue protein sequence, read N- to C-terminus: Dephospho-CoA kinase (205 aa).

Residues 4-203 (KIGITGGIGS…QKIHYLCSAK (200 aa)) form the DPCK domain. Position 12 to 17 (12 to 17 (GSGKSV)) interacts with ATP.

The protein belongs to the CoaE family.

It localises to the cytoplasm. The catalysed reaction is 3'-dephospho-CoA + ATP = ADP + CoA + H(+). It functions in the pathway cofactor biosynthesis; coenzyme A biosynthesis; CoA from (R)-pantothenate: step 5/5. In terms of biological role, catalyzes the phosphorylation of the 3'-hydroxyl group of dephosphocoenzyme A to form coenzyme A. The protein is Dephospho-CoA kinase of Bacteroides fragilis (strain YCH46).